The primary structure comprises 138 residues: LQGLLLWLLLSVGGVWASRGPLRPLCRPINATLAAENEACPVCITFTTTICAGYCPSMVRVLPAALPPVPQPVCTYHELHFASIRLPGCPPGVDPMVSFPVALSCRCGPCRLSNSDCGGPRAQSLACDRPLLPGLLFL.

An N-terminal signal peptide occupies residues 1–17 (LQGLLLWLLLSVGGVWA). Disulfide bonds link C26/C74, C40/C89, C43/C127, C51/C105, C55/C107, and C110/C117. N30 carries an N-linked (GlcNAc...) asparagine glycan.

Belongs to the glycoprotein hormones subunit beta family. In terms of assembly, heterodimer of a common alpha chain and a unique beta chain which confers biological specificity to thyrotropin, lutropin, follitropin and gonadotropin.

It is found in the secreted. Its function is as follows. Promotes spermatogenesis and ovulation by stimulating the testes and ovaries to synthesize steroids. This Canis lupus familiaris (Dog) protein is Lutropin subunit beta (LHB).